Consider the following 505-residue polypeptide: Maturase K (505 aa).

This sequence belongs to the intron maturase 2 family. MatK subfamily.

Its subcellular location is the plastid. The protein resides in the chloroplast. In terms of biological role, usually encoded in the trnK tRNA gene intron. Probably assists in splicing its own and other chloroplast group II introns. The polypeptide is Maturase K (Spinacia oleracea (Spinach)).